The following is a 282-amino-acid chain: ABC transporter I family member 21 (282 aa).

Residues 13–248 enclose the ABC transporter domain; the sequence is IRVSGMQFSY…KTSPNLLSVV (236 aa). Position 46-53 (46-53) interacts with ATP; that stretch reads GANGSGKT.

The protein belongs to the ABC transporter superfamily. ABCI family. As to expression, expressed in root elongating zone and root meristem, as well as in elongating etiolated hypocotyls.

The protein resides in the cytoplasm. In Arabidopsis thaliana (Mouse-ear cress), this protein is ABC transporter I family member 21 (ABCI21).